We begin with the raw amino-acid sequence, 140 residues long: Large ribosomal subunit protein uL16c (140 aa).

Belongs to the universal ribosomal protein uL16 family. Part of the 50S ribosomal subunit.

It localises to the plastid. The protein localises to the chloroplast. This is Large ribosomal subunit protein uL16c from Psilotum nudum (Whisk fern).